The following is a 343-amino-acid chain: MAKRQLTRRQSWRIEKIQEERAARAAKRESRAVEELEGGDLGPEQNGLVIAHFGVQVEVEAEDGELAGQVCRCHLRANLPALVTGDRVVWRAGNQGGGVIVAQLPRRSELCRPDMRGQLKPVAANVDRIVIVFAPLPEPHANLIDRYLVAAEHAGIRPLLLLNKADLVNEENAAGLDALLATYQRLGYPLLEVSARQGAGMQELQAALDGHVSVFVGQSGVGKSSLVNSLLPGVDTRVGALSEQTGKGMHTTTTARLFHFPGGGELIDSPGIREFSLGHVRRADVEAGFIEFRDLLGHCRFRDCRHDREPGCALLKALDEGRIQPQRMASYRHILASLPEPEY.

One can recognise a CP-type G domain in the interval 116–275 (RGQLKPVAAN…LIDSPGIREF (160 aa)). GTP is bound by residues 163–166 (NKAD) and 217–225 (GQSGVGKSS). 4 residues coordinate Zn(2+): cysteine 299, cysteine 304, histidine 306, and cysteine 312.

It belongs to the TRAFAC class YlqF/YawG GTPase family. RsgA subfamily. Monomer. Associates with 30S ribosomal subunit, binds 16S rRNA. Requires Zn(2+) as cofactor.

Its subcellular location is the cytoplasm. One of several proteins that assist in the late maturation steps of the functional core of the 30S ribosomal subunit. Helps release RbfA from mature subunits. May play a role in the assembly of ribosomal proteins into the subunit. Circularly permuted GTPase that catalyzes slow GTP hydrolysis, GTPase activity is stimulated by the 30S ribosomal subunit. In Azotobacter vinelandii (strain DJ / ATCC BAA-1303), this protein is Small ribosomal subunit biogenesis GTPase RsgA.